The sequence spans 130 residues: S-adenosylmethionine decarboxylase proenzyme (130 aa).

S78 serves as the catalytic Schiff-base intermediate with substrate; via pyruvic acid. The residue at position 78 (S78) is a Pyruvic acid (Ser); by autocatalysis. H83 acts as the Proton acceptor; for processing activity in catalysis. C98 functions as the Proton donor; for catalytic activity in the catalytic mechanism.

This sequence belongs to the prokaryotic AdoMetDC family. Type 1 subfamily. In terms of assembly, heterotetramer of two alpha and two beta chains arranged as a dimer of alpha/beta heterodimers. Requires pyruvate as cofactor. Post-translationally, is synthesized initially as an inactive proenzyme. Formation of the active enzyme involves a self-maturation process in which the active site pyruvoyl group is generated from an internal serine residue via an autocatalytic post-translational modification. Two non-identical subunits are generated from the proenzyme in this reaction, and the pyruvate is formed at the N-terminus of the alpha chain, which is derived from the carboxyl end of the proenzyme. The post-translation cleavage follows an unusual pathway, termed non-hydrolytic serinolysis, in which the side chain hydroxyl group of the serine supplies its oxygen atom to form the C-terminus of the beta chain, while the remainder of the serine residue undergoes an oxidative deamination to produce ammonia and the pyruvoyl group blocking the N-terminus of the alpha chain.

It catalyses the reaction S-adenosyl-L-methionine + H(+) = S-adenosyl 3-(methylsulfanyl)propylamine + CO2. It functions in the pathway amine and polyamine biosynthesis; S-adenosylmethioninamine biosynthesis; S-adenosylmethioninamine from S-adenosyl-L-methionine: step 1/1. Catalyzes the decarboxylation of S-adenosylmethionine to S-adenosylmethioninamine (dcAdoMet), the propylamine donor required for the synthesis of the polyamines spermine and spermidine from the diamine putrescine. This is S-adenosylmethionine decarboxylase proenzyme from Aeropyrum pernix (strain ATCC 700893 / DSM 11879 / JCM 9820 / NBRC 100138 / K1).